A 555-amino-acid polypeptide reads, in one-letter code: Dihydroxy-acid dehydratase (555 aa).

D78 provides a ligand contact to Mg(2+). Residue C119 participates in [2Fe-2S] cluster binding. Mg(2+) contacts are provided by D120 and K121. The residue at position 121 (K121) is an N6-carboxylysine. Residue C195 coordinates [2Fe-2S] cluster. E444 provides a ligand contact to Mg(2+). The active-site Proton acceptor is the S470.

Belongs to the IlvD/Edd family. As to quaternary structure, homodimer. The cofactor is [2Fe-2S] cluster. It depends on Mg(2+) as a cofactor.

The enzyme catalyses (2R)-2,3-dihydroxy-3-methylbutanoate = 3-methyl-2-oxobutanoate + H2O. The catalysed reaction is (2R,3R)-2,3-dihydroxy-3-methylpentanoate = (S)-3-methyl-2-oxopentanoate + H2O. The protein operates within amino-acid biosynthesis; L-isoleucine biosynthesis; L-isoleucine from 2-oxobutanoate: step 3/4. It participates in amino-acid biosynthesis; L-valine biosynthesis; L-valine from pyruvate: step 3/4. Its function is as follows. Functions in the biosynthesis of branched-chain amino acids. Catalyzes the dehydration of (2R,3R)-2,3-dihydroxy-3-methylpentanoate (2,3-dihydroxy-3-methylvalerate) into 2-oxo-3-methylpentanoate (2-oxo-3-methylvalerate) and of (2R)-2,3-dihydroxy-3-methylbutanoate (2,3-dihydroxyisovalerate) into 2-oxo-3-methylbutanoate (2-oxoisovalerate), the penultimate precursor to L-isoleucine and L-valine, respectively. The chain is Dihydroxy-acid dehydratase from Dehalococcoides mccartyi (strain CBDB1).